We begin with the raw amino-acid sequence, 148 residues long: UPF0179 protein Mpal_0949 (148 aa).

It belongs to the UPF0179 family.

In Methanosphaerula palustris (strain ATCC BAA-1556 / DSM 19958 / E1-9c), this protein is UPF0179 protein Mpal_0949.